We begin with the raw amino-acid sequence, 132 residues long: Nickel-responsive regulator (132 aa).

Ni(2+)-binding residues include histidine 76, histidine 87, histidine 89, and cysteine 95.

Belongs to the transcriptional regulatory CopG/NikR family. Homotetramer. Ni(2+) serves as cofactor.

Functionally, transcriptional repressor of the nikABCDE operon. Is active in the presence of excessive concentrations of intracellular nickel. This chain is Nickel-responsive regulator, found in Klebsiella pneumoniae (strain 342).